The sequence spans 63 residues: Small ribosomal subunit protein eS30 (63 aa).

The disordered stretch occupies residues 1–33 (MGKVHGSLARAGKVKSQTPKVEKQEKPKKPQGR).

This sequence belongs to the eukaryotic ribosomal protein eS30 family. Component of the small ribosomal subunit. Mature ribosomes consist of a small (40S) and a large (60S) subunit. The 40S subunit contains about 32 different proteins and 1 molecule of RNA (18S). The 60S subunit contains 45 different proteins and 3 molecules of RNA (25S, 5.8S and 5S).

The protein localises to the cytoplasm. Its function is as follows. Component of the ribosome, a large ribonucleoprotein complex responsible for the synthesis of proteins in the cell. The small ribosomal subunit (SSU) binds messenger RNAs (mRNAs) and translates the encoded message by selecting cognate aminoacyl-transfer RNA (tRNA) molecules. The large subunit (LSU) contains the ribosomal catalytic site termed the peptidyl transferase center (PTC), which catalyzes the formation of peptide bonds, thereby polymerizing the amino acids delivered by tRNAs into a polypeptide chain. The nascent polypeptides leave the ribosome through a tunnel in the LSU and interact with protein factors that function in enzymatic processing, targeting, and the membrane insertion of nascent chains at the exit of the ribosomal tunnel. This is Small ribosomal subunit protein eS30 (RPS30) from Candida albicans (strain SC5314 / ATCC MYA-2876) (Yeast).